We begin with the raw amino-acid sequence, 349 residues long: MAHQTGIHATPELKEFFAKARNGSVRLIKVIIEEEQLVLGSHKELKHAWDQDYDAFVLQLLDESQPCYILYRLDSQNAQGYEWIFLSWSPDHSPVRLKMLYAATRATVKKEFGGGHIKDEIFGTLKEDVALSGYKKHVSSCAAPAPLTAAERELQAIKINEVKTEISVESKQQTLQGLSFPLRPQAEEAILLLKQKKINYIQLRLDLEKETVDLVHTKHTEIQDLPGRIPQDTARYHFFLYKHSHEGDHLESVVFIYSMPGYKCSIKERMLYSSCKNRLLDSVEQDFLMEIAKKIEIEDGAELTDEFLYDEVHPKQHAFKQAFAKPKGPAGKRGQKRLIKGPGENGEDS.

ADF-H domains lie at Q4–S139 and G177–H313. The interval Q321–S349 is disordered.

The protein belongs to the actin-binding proteins ADF family. Twinfilin subfamily. As to quaternary structure, interacts with G-actin; ADP-actin form and capping protein (CP).

Its subcellular location is the cytoplasm. The protein localises to the cytoskeleton. It is found in the perinuclear region. Its function is as follows. Actin-binding protein involved in motile and morphological processes. Inhibits actin polymerization, likely by sequestering G-actin. This is Twinfilin-2-B (twf2-b) from Xenopus laevis (African clawed frog).